A 330-amino-acid polypeptide reads, in one-letter code: Polyprenol dehydrogenase (330 aa).

The NAD(+) site is built by isoleucine 55, tyrosine 208, lysine 212, and threonine 245. The active-site Proton acceptor is the tyrosine 208.

The protein belongs to the short-chain dehydrogenases/reductases (SDR) family. Widely expressed. Highly expressed in the pancreas.

The protein localises to the lipid droplet. The protein resides in the secreted. It catalyses the reaction a di-trans,poly-cis-polyprenol + NAD(+) = a di-trans,poly-cis-polyprenal + NADH + H(+). It carries out the reaction a di-trans,poly-cis-polyprenol + NADP(+) = a di-trans,poly-cis-polyprenal + NADPH + H(+). The enzyme catalyses a di-trans,poly-cis-dolichol + NADP(+) = a di-trans,poly-cis-dolichal + NADPH + H(+). The catalysed reaction is a di-trans,poly-cis-dolichol + NAD(+) = a di-trans,poly-cis-dolichal + NADH + H(+). Its pathway is protein modification; protein glycosylation. In terms of biological role, oxidoreductase that plays a key role in early steps of protein N-linked glycosylation by mediating two non-consecutive steps in dolichol biosynthesis. Acts both as a NAD(+)-dependent dehydrogenase and as a NADPH-dependent reductase during the conversion of polyprenol into dolichol. First catalyzes the NAD(+)-dependent dehydrogenation of polyprenol into polyprenal; polyprenal is then reduced into dolichal by SRD5A3. It then catalyzes the NADPH-dependent reduction of dolichal into dolichol. May also acts as a positive regulator of starvation-induced autophagy. The polypeptide is Polyprenol dehydrogenase (Homo sapiens (Human)).